Here is a 32-residue protein sequence, read N- to C-terminus: U5-ctenitoxin-Pn1a (32 aa).

Disulfide bonds link cysteine 3–cysteine 16, cysteine 9–cysteine 21, and cysteine 15–cysteine 30.

In terms of tissue distribution, expressed by the venom gland.

The protein resides in the secreted. In terms of biological role, blocks voltage-gated sodium channels (Nav). Causes tail erection, scratching and a reduction in mobility at a dose level of 1.40 mg/mouse. In Phoneutria nigriventer (Brazilian armed spider), this protein is U5-ctenitoxin-Pn1a.